Here is a 283-residue protein sequence, read N- to C-terminus: Diaminopimelate epimerase (283 aa).

Positions 13 and 67 each coordinate substrate. The active-site Proton donor is the Cys-76. Residues 77-78, Asn-166, Asn-199, and 217-218 contribute to the substrate site; these read GN and ER. The Proton acceptor role is filled by Cys-226. Position 227–228 (227–228) interacts with substrate; sequence GT.

Belongs to the diaminopimelate epimerase family. As to quaternary structure, homodimer.

It localises to the cytoplasm. The catalysed reaction is (2S,6S)-2,6-diaminopimelate = meso-2,6-diaminopimelate. It functions in the pathway amino-acid biosynthesis; L-lysine biosynthesis via DAP pathway; DL-2,6-diaminopimelate from LL-2,6-diaminopimelate: step 1/1. Catalyzes the stereoinversion of LL-2,6-diaminopimelate (L,L-DAP) to meso-diaminopimelate (meso-DAP), a precursor of L-lysine and an essential component of the bacterial peptidoglycan. This Desulforapulum autotrophicum (strain ATCC 43914 / DSM 3382 / VKM B-1955 / HRM2) (Desulfobacterium autotrophicum) protein is Diaminopimelate epimerase.